A 205-amino-acid chain; its full sequence is Small ribosomal subunit protein uS4 (205 aa).

The segment covering 1 to 16 has biased composition (basic and acidic residues); sequence MSKRETTKYKIDRRMG. The tract at residues 1–46 is disordered; it reads MSKRETTKYKIDRRMGENIWGRPKSPVNRRDYGPGQHGQRRKGKLS. One can recognise an S4 RNA-binding domain in the interval 94–157; the sequence is SRLDAVVYRA…KQLVLVLESV (64 aa).

It belongs to the universal ribosomal protein uS4 family. In terms of assembly, part of the 30S ribosomal subunit. Contacts protein S5. The interaction surface between S4 and S5 is involved in control of translational fidelity.

Its function is as follows. One of the primary rRNA binding proteins, it binds directly to 16S rRNA where it nucleates assembly of the body of the 30S subunit. Functionally, with S5 and S12 plays an important role in translational accuracy. The protein is Small ribosomal subunit protein uS4 of Bartonella tribocorum (strain CIP 105476 / IBS 506).